The following is a 163-amino-acid chain: Flagellar assembly factor FliW (163 aa).

Over residues 136–156 (PFFETSEKKQSGLQRLERQPE) the composition is skewed to basic and acidic residues. A disordered region spans residues 136-163 (PFFETSEKKQSGLQRLERQPEKSVPPAG).

It belongs to the FliW family. As to quaternary structure, interacts with translational regulator CsrA and flagellin(s).

The protein localises to the cytoplasm. Functionally, acts as an anti-CsrA protein, binds CsrA and prevents it from repressing translation of its target genes, one of which is flagellin. Binds to flagellin and participates in the assembly of the flagellum. The sequence is that of Flagellar assembly factor FliW from Geotalea uraniireducens (strain Rf4) (Geobacter uraniireducens).